The primary structure comprises 319 residues: Probable cystathionine gamma-synthase (319 aa).

Lys-197 is subject to N6-(pyridoxal phosphate)lysine.

It belongs to the trans-sulfuration enzymes family. As to quaternary structure, homotetramer. Requires pyridoxal 5'-phosphate as cofactor.

The protein localises to the cytoplasm. It catalyses the reaction O-succinyl-L-homoserine + L-cysteine = L,L-cystathionine + succinate + H(+). Catalyzes the formation of L-cystathionine from O-succinyl-L-homoserine (OSHS) and L-cysteine, via a gamma-replacement reaction. In the absence of thiol, catalyzes gamma-elimination to form 2-oxobutanoate, succinate and ammonia. The chain is Probable cystathionine gamma-synthase (metB) from Herpetosiphon aurantiacus (Herpetosiphon giganteus).